We begin with the raw amino-acid sequence, 326 residues long: tRNA N6-adenosine threonylcarbamoyltransferase (326 aa).

Fe cation is bound by residues H113 and H117. Substrate is bound by residues 134-138 (VASGG), D167, G180, and N267. D291 serves as a coordination point for Fe cation.

This sequence belongs to the KAE1 / TsaD family. Fe(2+) serves as cofactor.

The protein resides in the cytoplasm. The enzyme catalyses L-threonylcarbamoyladenylate + adenosine(37) in tRNA = N(6)-L-threonylcarbamoyladenosine(37) in tRNA + AMP + H(+). In terms of biological role, required for the formation of a threonylcarbamoyl group on adenosine at position 37 (t(6)A37) in tRNAs that read codons beginning with adenine. Is involved in the transfer of the threonylcarbamoyl moiety of threonylcarbamoyl-AMP (TC-AMP) to the N6 group of A37, together with TsaE and TsaB. TsaD likely plays a direct catalytic role in this reaction. The protein is tRNA N6-adenosine threonylcarbamoyltransferase of Thermus thermophilus (strain ATCC 27634 / DSM 579 / HB8).